A 126-amino-acid polypeptide reads, in one-letter code: Glycine cleavage system H protein (126 aa).

The region spanning 22–104 (KAYIGITSFA…YEQAWMIVVE (83 aa)) is the Lipoyl-binding domain. Residue lysine 63 is modified to N6-lipoyllysine.

This sequence belongs to the GcvH family. The glycine cleavage system is composed of four proteins: P, T, L and H. (R)-lipoate serves as cofactor.

Functionally, the glycine cleavage system catalyzes the degradation of glycine. The H protein shuttles the methylamine group of glycine from the P protein to the T protein. In terms of biological role, is also involved in protein lipoylation via its role as an octanoyl/lipoyl carrier protein intermediate. This is Glycine cleavage system H protein from Brevibacillus brevis (strain 47 / JCM 6285 / NBRC 100599).